The primary structure comprises 210 residues: Secreted isochorismatase effector Isc1 (210 aa).

Active-site residues include aspartate 25, lysine 90, and cysteine 124.

It belongs to the isochorismatase family.

Its subcellular location is the secreted. The protein localises to the host cytoplasm. The protein resides in the host nucleus. It catalyses the reaction isochorismate + H2O = (2S,3S)-2,3-dihydroxy-2,3-dihydrobenzoate + pyruvate. Secreted isochorismatase required for full virulence of P.sojae. Suppresses salicylate-mediated innate immunity of the host by disrupting the plant salicylate metabolism pathway via hydrolysis of its isochorismate precursor. This Phytophthora sojae (strain P6497) (Soybean stem and root rot agent) protein is Secreted isochorismatase effector Isc1.